The following is a 113-amino-acid chain: Class I hydrophobin 1 (113 aa).

The first 17 residues, 1–17, serve as a signal peptide directing secretion; it reads MQFKFLSTVALATLAVA. Intrachain disulfides connect C32–C92, C39–C86, C40–C73, and C93–C106.

This sequence belongs to the fungal hydrophobin family. Self-assembles to form functional amyloid fibrils called rodlets. Self-assembly into fibrillar rodlets occurs spontaneously at hydrophobic:hydrophilic interfaces and the rodlets further associate laterally to form amphipathic monolayers.

The protein resides in the secreted. It localises to the cell wall. Functionally, aerial growth, conidiation, and dispersal of filamentous fungi in the environment rely upon a capability of their secreting small amphipathic proteins called hydrophobins (HPBs) with low sequence identity. Class I can self-assemble into an outermost layer of rodlet bundles on aerial cell surfaces, conferring cellular hydrophobicity that supports fungal growth, development and dispersal; whereas Class II form highly ordered films at water-air interfaces through intermolecular interactions but contribute nothing to the rodlet structure. CoH1 is an asexual monokaryon-specific class I hydrophobin that is involved in aerial growth of mycelia. The chain is Class I hydrophobin 1 from Coprinopsis cinerea (Inky cap fungus).